The primary structure comprises 738 residues: AP-4 complex subunit beta-1 (738 aa).

A hinge region spans residues 534 to 600 (CSPKSDPSLG…NASFATSGHL (67 aa)). The ear; mediates interaction with TEPSIN stretch occupies residues 601 to 738 (ISEENKEGAQ…VIGTVGDIKS (138 aa)).

This sequence belongs to the adaptor complexes large subunit family. As to quaternary structure, adaptor protein complex 4 (AP-4) is a heterotetramer composed of two large adaptins (epsilon-type subunit AP4E1 and beta-type subunit AP4B1), a medium adaptin (mu-type subunit AP4M1) and a small adaptin (sigma-type AP4S1). Interacts with TEPSIN; this interaction requires the presence of a functional AP-4 complex. Interacts with GRIA2; probably indirect it mediates the somatodendritic localization of GRIA2 in neurons.

Its subcellular location is the golgi apparatus. It localises to the trans-Golgi network membrane. Component of the adaptor protein complex 4 (AP-4). Adaptor protein complexes are vesicle coat components involved both in vesicle formation and cargo selection. They control the vesicular transport of proteins in different trafficking pathways. AP-4 forms a non clathrin-associated coat on vesicles departing the trans-Golgi network (TGN) and may be involved in the targeting of proteins from the trans-Golgi network (TGN) to the endosomal-lysosomal system. It is also involved in protein sorting to the basolateral membrane in epithelial cells and the proper asymmetric localization of somatodendritic proteins in neurons. AP-4 is involved in the recognition and binding of tyrosine-based sorting signals found in the cytoplasmic part of cargos, but may also recognize other types of sorting signal. This is AP-4 complex subunit beta-1 from Mus musculus (Mouse).